The sequence spans 191 residues: uncharacterized protein (191 aa).

Residues Ile-3 to Met-63 form the HTH tetR-type domain. The segment at residues Thr-26–Phe-45 is a DNA-binding region (H-T-H motif).

This is an uncharacterized protein from Bacillus subtilis (strain 168).